The following is a 690-amino-acid chain: Protein MODIFIED TRANSPORT TO THE VACUOLE 1 (690 aa).

In terms of domain architecture, VHS spans 20–150; sequence VTSDEDKVAP…PESINRRIEG (131 aa). Disordered stretches follow at residues 228–258 and 518–551; these read DGNY…SVRV and FSID…HQAP. The span at 243 to 257 shows a compositional bias: low complexity; that stretch reads GHASGEASESSASVR. Positions 520-536 are enriched in polar residues; sequence IDENNSNQKGSSSSTLP.

In terms of assembly, binds to clathrin heavy chain. As to expression, expressed in inflorescence stems, stigmas, roots, roots meristems, embryos, and floral and leaf vasculatures, but absent from the floral abscission zone.

It is found in the golgi apparatus. Its subcellular location is the trans-Golgi network. The protein resides in the cytoplasmic vesicle. The protein localises to the clathrin-coated vesicle. Mediates clathrin-dependent trafficking of vacuolar cargo from the trans-Golgi network (TGN). Promotes plant growth. In Arabidopsis thaliana (Mouse-ear cress), this protein is Protein MODIFIED TRANSPORT TO THE VACUOLE 1.